Here is a 659-residue protein sequence, read N- to C-terminus: Sodium/nucleoside cotransporter 2 (659 aa).

Residues 1-10 (MAKSEGRKSA) show a composition bias toward basic and acidic residues. Residues 1–22 (MAKSEGRKSASQDTSENGMENP) form a disordered region. Ser-46 carries the phosphoserine modification. 14 helical membrane-spanning segments follow: residues 81–101 (ILLG…CILN), 105–124 (ALAL…CHFL), 149–167 (KRVF…LALD), 173–193 (EQLI…ACSK), 201–221 (RTVF…IRTE), 234–254 (IQIF…DTLV), 261–281 (QSLP…YLGL), 296–315 (TMGT…FVGM), 337–356 (VMTG…FISF), 363–382 (LISA…KLVY), 424–444 (VAAN…TLSW), 455–475 (TFQV…GVQW), 530–550 (ATFS…LGGL), and 568–588 (ALFT…ILYV).

It belongs to the concentrative nucleoside transporter (CNT) (TC 2.A.41) family. As to expression, expressed in liver (in bile canalicular membrane vesicles (CMV) but not in sinusoidal vesicles), jejunum, spleen and heart. Also expressed in brain and skeletal muscle. Not expressed in kidney, muscle and lung.

It localises to the membrane. The protein localises to the apicolateral cell membrane. The enzyme catalyses adenosine(out) + Na(+)(out) = adenosine(in) + Na(+)(in). The catalysed reaction is inosine(out) + Na(+)(out) = inosine(in) + Na(+)(in). It catalyses the reaction guanosine(out) + Na(+)(out) = guanosine(in) + Na(+)(in). It carries out the reaction uridine(out) + Na(+)(out) = uridine(in) + Na(+)(in). With respect to regulation, inhibited by formycin B, partially inhibited by purine analog ara-A. Functionally, sodium-dependent and purine-selective. Exhibits the transport characteristics of the nucleoside transport system cif or N1 subtype (N1/cif) (selective for purine nucleosides and uridine). Accepts purine, analogs of purine nucleosides and uridine, and exhibits high affinity for adenosine. May contribute to regulate the transport of organic compounds in testes across the blood-testis-barrier. The protein is Sodium/nucleoside cotransporter 2 (Slc28a2) of Rattus norvegicus (Rat).